Here is an 88-residue protein sequence, read N- to C-terminus: Exodeoxyribonuclease 7 small subunit (88 aa).

The protein belongs to the XseB family. As to quaternary structure, heterooligomer composed of large and small subunits.

Its subcellular location is the cytoplasm. The enzyme catalyses Exonucleolytic cleavage in either 5'- to 3'- or 3'- to 5'-direction to yield nucleoside 5'-phosphates.. In terms of biological role, bidirectionally degrades single-stranded DNA into large acid-insoluble oligonucleotides, which are then degraded further into small acid-soluble oligonucleotides. The protein is Exodeoxyribonuclease 7 small subunit of Bordetella bronchiseptica (strain ATCC BAA-588 / NCTC 13252 / RB50) (Alcaligenes bronchisepticus).